The following is a 173-amino-acid chain: Disulfide bond formation protein B (173 aa).

Over 1–16 (MRILSSLKTFSQSRLS) the chain is Cytoplasmic. The chain crosses the membrane as a helical span at residues 17 to 33 (WLLLLAFVVFFTLCAMY). Topologically, residues 34–51 (FQHVMLLAPCVMCIYERI) are periplasmic. A disulfide bridge links Cys-43 with Cys-46. The helical transmembrane segment at 52 to 67 (AMLGIGVAALIGAIAP) threads the bilayer. The Cytoplasmic segment spans residues 68 to 74 (QNPVVRW). A helical transmembrane segment spans residues 75 to 92 (LGFAAWGASSYKGLMLAI). The Periplasmic portion of the chain corresponds to 93-147 (EHVNYQFNPSPFATCDLFVTFPAWAPLNQWAPNLFEAYGDCSKVVWQFLTLSMPQ). An intrachain disulfide couples Cys-107 to Cys-133. Residues 148 to 166 (WLVVIFAANLLALAIFVVA) form a helical membrane-spanning segment. Residues 167-173 (QLAKTSR) lie on the Cytoplasmic side of the membrane.

It belongs to the DsbB family.

The protein resides in the cell inner membrane. In terms of biological role, required for disulfide bond formation in some periplasmic proteins. Acts by oxidizing the DsbA protein. The chain is Disulfide bond formation protein B from Vibrio cholerae serotype O1 (strain ATCC 39315 / El Tor Inaba N16961).